A 321-amino-acid polypeptide reads, in one-letter code: Transmembrane and ubiquitin-like domain-containing protein 2 (321 aa).

A helical membrane pass occupies residues 36–56; the sequence is VMVVAGVVVLILALVLAWLST. Disordered stretches follow at residues 87-131 and 145-170; these read LVAG…GGVE and KRQA…LPPS. Residues 104 to 120 are compositionally biased toward basic and acidic residues; that stretch reads EGNDEKAEEAGEGRGDS. Positions 174-247 constitute a Ubiquitin-like domain; it reads ITVRLKFLND…IHCHRSPPGS (74 aa). 2 helical membrane passes run 266 to 286 and 295 to 315; these read LGVN…GVVW and FFTA…SFLV.

The protein resides in the membrane. This Homo sapiens (Human) protein is Transmembrane and ubiquitin-like domain-containing protein 2 (TMUB2).